We begin with the raw amino-acid sequence, 210 residues long: Calcium-activated potassium channel subunit beta-4 (210 aa).

Residues 1–19 lie on the Cytoplasmic side of the membrane; it reads MAKLRVAYEYTEAEDKSIR. Residues 20 to 40 form a helical membrane-spanning segment; sequence LGLFLIISGVVSLFIFGFCWL. The Extracellular portion of the chain corresponds to 41–167; that stretch reads SPALQDLQAT…DVLLHRTHDE (127 aa). N-linked (GlcNAc...) asparagine glycosylation is found at asparagine 53 and asparagine 90. Residues 168 to 188 form a helical membrane-spanning segment; sequence IVLLHCFLWPLVTFVVGVLIV. Topologically, residues 189-210 are cytoplasmic; that stretch reads VLTICAKSLAVKAEAMKKRKFS.

Belongs to the KCNMB (TC 8.A.14.1) family. KCNMB4 subfamily. Interacts with KCNMA1 tetramer. There are probably 4 molecules of KCMNB4 per KCNMA1 tetramer. Interacts with FMR1 (via N-terminus). In terms of processing, phosphorylated. Phosphorylation modulates its effect on KCNMA1 activation kinetics. N-glycosylated. A highly glycosylated form is promoted by KCNMA1. Glycosylation, which is not required for the interaction with KCNMA1 and subcellular location, increases protection against charybdotoxin. Predominantly expressed in brain. In brain, it is expressed in the cerebellum, cerebral cortex, medulla, spinal cord, occipital pole, frontal lobe, temporal lobe, putamen, amygdala, caudate nucleus, corpus callosum, hippocampus, substantia nigra and thalamus. Weakly or not expressed in other tissues.

The protein resides in the membrane. In terms of biological role, regulatory subunit of the calcium activated potassium KCNMA1 (maxiK) channel. Modulates the calcium sensitivity and gating kinetics of KCNMA1, thereby contributing to KCNMA1 channel diversity. Decreases the gating kinetics and calcium sensitivity of the KCNMA1 channel, but with fast deactivation kinetics. May decrease KCNMA1 channel openings at low calcium concentrations but increases channel openings at high calcium concentrations. Makes KCNMA1 channel resistant to 100 nM charybdotoxin (CTX) toxin concentrations. The sequence is that of Calcium-activated potassium channel subunit beta-4 (KCNMB4) from Homo sapiens (Human).